The following is a 236-amino-acid chain: Small ribosomal subunit protein uS3 (236 aa).

The KH type-2 domain maps to isoleucine 39–arginine 107. The interval methionine 213–alanine 236 is disordered.

This sequence belongs to the universal ribosomal protein uS3 family. Part of the 30S ribosomal subunit. Forms a tight complex with proteins S10 and S14.

In terms of biological role, binds the lower part of the 30S subunit head. Binds mRNA in the 70S ribosome, positioning it for translation. In Bradyrhizobium sp. (strain ORS 278), this protein is Small ribosomal subunit protein uS3.